A 79-amino-acid polypeptide reads, in one-letter code: Acyl carrier protein (79 aa).

The Carrier domain maps to 2 to 77; sequence SEIGERVKKI…DATKFLEKNA (76 aa). At Ser-37 the chain carries O-(pantetheine 4'-phosphoryl)serine.

Belongs to the acyl carrier protein (ACP) family. Post-translationally, 4'-phosphopantetheine is transferred from CoA to a specific serine of apo-ACP by AcpS. This modification is essential for activity because fatty acids are bound in thioester linkage to the sulfhydryl of the prosthetic group.

It is found in the cytoplasm. The protein operates within lipid metabolism; fatty acid biosynthesis. In terms of biological role, carrier of the growing fatty acid chain in fatty acid biosynthesis. This chain is Acyl carrier protein, found in Nitrobacter winogradskyi (strain ATCC 25391 / DSM 10237 / CIP 104748 / NCIMB 11846 / Nb-255).